Consider the following 218-residue polypeptide: OPA3-like protein (218 aa).

The stretch at 129-179 (NEIMEKQFVLQKKKNELQSSTEEIDSTEKDFDELHKVILKVERELHTLRQN) forms a coiled coil. A disordered region spans residues 175–218 (TLRQNTPSQNEQAEATPSKEIPRETVSEKADHPPSSNTKSVSTG). Residues 176-189 (LRQNTPSQNEQAEA) show a composition bias toward polar residues. Over residues 194–206 (EIPRETVSEKADH) the composition is skewed to basic and acidic residues. Polar residues predominate over residues 208-218 (PSSNTKSVSTG).

The protein belongs to the OPA3 family.

In Schizosaccharomyces pombe (strain 972 / ATCC 24843) (Fission yeast), this protein is OPA3-like protein.